A 229-amino-acid polypeptide reads, in one-letter code: MGDKIWLPFPVLLLAALPPVLLPGAAGFTPSLDSDFTFTLPAGQRECFYQPMPLKASLEIEYQVLDGAGLDIDFHLASPEGKTLVFEQRKSDGVHTVETEVGDYMFCFDNTFSTISEKVIFFELILDNMGEQAQEQEDWKKYITGTDMLDMKLEDILESINSIKSRLSKSGHIQTLLRAFEARDRNIQESNFDRVNFWSMVNLVVMVVVSAIQVYMLKSLFEDKRKSRT.

The first 27 residues, Met-1–Gly-27, serve as a signal peptide directing secretion. At Phe-28 to Asn-196 the chain is on the lumenal side. The GOLD domain occupies Arg-45–Leu-126. Residues Phe-197–Leu-217 traverse the membrane as a helical segment. Residues Lys-218–Thr-229 lie on the Cytoplasmic side of the membrane.

It belongs to the EMP24/GP25L family. Interacts with TMED9 and TMED10.

It is found in the endoplasmic reticulum membrane. It localises to the golgi apparatus. Its subcellular location is the cis-Golgi network membrane. The protein resides in the endoplasmic reticulum-Golgi intermediate compartment membrane. Potential role in vesicular protein trafficking, mainly in the early secretory pathway. Required for the maintenance of the Golgi apparatus; involved in protein exchange between Golgi stacks during assembly. Probably not required for COPI-vesicle-mediated retrograde transport. The sequence is that of Transmembrane emp24 domain-containing protein 5 (TMED5) from Pongo abelii (Sumatran orangutan).